Consider the following 388-residue polypeptide: Succinate--CoA ligase [ADP-forming] subunit beta (388 aa).

The ATP-grasp domain maps to 9–244 (KSLFAEYGLP…PSQDDAREAH (236 aa)). ATP contacts are provided by residues Lys46, 53–55 (GRG), Glu99, Thr102, and Glu107. Asn199 and Asp213 together coordinate Mg(2+). Substrate contacts are provided by residues Asn264 and 321-323 (GIV).

The protein belongs to the succinate/malate CoA ligase beta subunit family. In terms of assembly, heterotetramer of two alpha and two beta subunits. Mg(2+) is required as a cofactor.

It catalyses the reaction succinate + ATP + CoA = succinyl-CoA + ADP + phosphate. The catalysed reaction is GTP + succinate + CoA = succinyl-CoA + GDP + phosphate. It participates in carbohydrate metabolism; tricarboxylic acid cycle; succinate from succinyl-CoA (ligase route): step 1/1. Functionally, succinyl-CoA synthetase functions in the citric acid cycle (TCA), coupling the hydrolysis of succinyl-CoA to the synthesis of either ATP or GTP and thus represents the only step of substrate-level phosphorylation in the TCA. The beta subunit provides nucleotide specificity of the enzyme and binds the substrate succinate, while the binding sites for coenzyme A and phosphate are found in the alpha subunit. The chain is Succinate--CoA ligase [ADP-forming] subunit beta from Shewanella putrefaciens (strain CN-32 / ATCC BAA-453).